The following is a 916-amino-acid chain: Protein translocase subunit SecA (916 aa).

Residues Gln87, 105 to 109, and Asp507 contribute to the ATP site; that span reads GEGKT. Residues Cys900, Cys902, Cys911, and His912 each contribute to the Zn(2+) site.

It belongs to the SecA family. In terms of assembly, monomer and homodimer. Part of the essential Sec protein translocation apparatus which comprises SecA, SecYEG and auxiliary proteins SecDF-YajC and YidC. Zn(2+) is required as a cofactor.

Its subcellular location is the cell inner membrane. The protein localises to the cytoplasm. The enzyme catalyses ATP + H2O + cellular proteinSide 1 = ADP + phosphate + cellular proteinSide 2.. Functionally, part of the Sec protein translocase complex. Interacts with the SecYEG preprotein conducting channel. Has a central role in coupling the hydrolysis of ATP to the transfer of proteins into and across the cell membrane, serving both as a receptor for the preprotein-SecB complex and as an ATP-driven molecular motor driving the stepwise translocation of polypeptide chains across the membrane. The polypeptide is Protein translocase subunit SecA (Neisseria meningitidis serogroup C / serotype 2a (strain ATCC 700532 / DSM 15464 / FAM18)).